A 204-amino-acid polypeptide reads, in one-letter code: High frequency lysogenization protein HflD homolog (204 aa).

This sequence belongs to the HflD family.

It localises to the cytoplasm. Its subcellular location is the cell inner membrane. The protein is High frequency lysogenization protein HflD homolog of Stenotrophomonas maltophilia (strain K279a).